The following is a 129-amino-acid chain: Large ribosomal subunit protein bL19 (129 aa).

This sequence belongs to the bacterial ribosomal protein bL19 family.

Its function is as follows. This protein is located at the 30S-50S ribosomal subunit interface and may play a role in the structure and function of the aminoacyl-tRNA binding site. This Rhizorhabdus wittichii (strain DSM 6014 / CCUG 31198 / JCM 15750 / NBRC 105917 / EY 4224 / RW1) (Sphingomonas wittichii) protein is Large ribosomal subunit protein bL19.